A 186-amino-acid chain; its full sequence is Cell division protein SepF (186 aa).

Disordered regions lie at residues 14-59 (EHDE…NETS) and 157-186 (GRSQESNETSSSVSSDNFPTWGYETSRLAQ). The segment covering 16 to 27 (DEYEEDYDEEME) has biased composition (acidic residues). The segment covering 159-171 (SQESNETSSSVSS) has biased composition (low complexity).

Belongs to the SepF family. In terms of assembly, homodimer. Interacts with FtsZ.

Its subcellular location is the cytoplasm. Functionally, cell division protein that is part of the divisome complex and is recruited early to the Z-ring. Probably stimulates Z-ring formation, perhaps through the cross-linking of FtsZ protofilaments. Its function overlaps with FtsA. This Synechocystis sp. (strain ATCC 27184 / PCC 6803 / Kazusa) protein is Cell division protein SepF.